Consider the following 146-residue polypeptide: MNPAHLLILAAVCVSPLGAFSNRPMPLNLYQFKNMIQCTVPNRSWWDFADYGCYCGRGGSGTPVDDLDRCCQVHDNCYNEAEKISRCWPYFKTYSYECSQGTLTCKGDNDACAAAVCDCDRLAAICFAGAPYNNNNYNIDLKARCQ.

A signal peptide spans 1–21; it reads MNPAHLLILAAVCVSPLGAFS. The propeptide occupies 22 to 27; the sequence is NRPMPL. 7 cysteine pairs are disulfide-bonded: Cys-38/Cys-98, Cys-53/Cys-145, Cys-55/Cys-71, Cys-70/Cys-126, Cys-77/Cys-119, Cys-87/Cys-112, and Cys-105/Cys-117. Positions 54, 56, and 58 each coordinate Ca(2+). His-74 is a catalytic residue. Asp-75 is a binding site for Ca(2+). Asp-120 is an active-site residue.

This sequence belongs to the phospholipase A2 family. Group I subfamily. D49 sub-subfamily. Ca(2+) serves as cofactor. Expressed by the venom gland.

It is found in the secreted. The catalysed reaction is a 1,2-diacyl-sn-glycero-3-phosphocholine + H2O = a 1-acyl-sn-glycero-3-phosphocholine + a fatty acid + H(+). In terms of biological role, PLA2 catalyzes the calcium-dependent hydrolysis of the 2-acyl groups in 3-sn-phosphoglycerides. Is able to suppress the acetylcholine (ACh)-evoked current mediated by alpha-7 (CHRNA7)-similar nAChRs in L.stagnalis neurons (IC(50)=37 nM) and to compete with alpha-bungarotoxin for binding to muscle- and alpha-7 neuronal nAChR types, as well as to AChBPs. In inhibition of alpha-bungarotoxin binding, this toxin is similarly active against T.californica nAChR (IC(50)=1.2 uM), human alpha-7 nAChR (IC(50)=3.2 uM), and L.stagnalis AChBP (IC(50)=1.0 uM), whereas it is not active against A.californica AChBP (IC(50)&gt;100 uM). The polypeptide is Acidic phospholipase A2 CM-II (Naja kaouthia (Monocled cobra)).